Reading from the N-terminus, the 278-residue chain is MLEQEENGLFEIPDYEHVEDETFPPFPPPASPERDPADAEPEEGSGSGVPVPPKRTVKRNLPKLDATRLTSERGLPALRHVFDKTKFKGKGHEAEDLKTLIRHMEHWAHRLFPKLQFEDFIDRVENLGNKKEVQTCLKRIRLDLPIVHEDFVNNNDEVGEANGPDVSATGFDPFLTSSSDSRKFASEPTRSLTEEQQQRIERNKQLALERRQAKLLSNSQSLENDVTVEENSTGEDQEESNGLNIDTADGPHDVPFASTHEEEQCKAEETQLDHTNLD.

A disordered region spans residues 1–59 (MLEQEENGLFEIPDYEHVEDETFPPFPPPASPERDPADAEPEEGSGSGVPVPPKRTVKR). The interval 64-140 (LDATRLTSER…KEVQTCLKRI (77 aa)) is interaction with TIMELESS. Disordered stretches follow at residues 155–197 (NDEV…EEQQ) and 216–278 (LSNS…TNLD). Phosphoserine occurs at positions 191 and 219. Positions 226–239 (VTVEENSTGEDQEE) are enriched in acidic residues. Phosphothreonine is present on T233. A compositionally biased stretch (basic and acidic residues) spans 259–278 (THEEEQCKAEETQLDHTNLD).

Belongs to the CSM3 family. Interacts with MCM6 and MCM7. Interacts with TIMELESS (via N-terminus), which impairs TIMELESS self-association. Interacts with RPA2 and PRDX2. In terms of tissue distribution, expressed in brain.

The protein localises to the cytoplasm. Its subcellular location is the nucleus. In terms of biological role, plays an important role in the control of DNA replication and the maintenance of replication fork stability. Important for cell survival after DNA damage or replication stress. May be specifically required for the ATR-CHEK1 pathway in the replication checkpoint induced by hydroxyurea or ultraviolet light. Forms a complex with TIMELESS and this complex regulates DNA replication processes under both normal and stress conditions, stabilizes replication forks and influences both CHEK1 phosphorylation and the intra-S phase checkpoint in response to genotoxic stress. The polypeptide is TIMELESS-interacting protein (Tipin) (Mus musculus (Mouse)).